We begin with the raw amino-acid sequence, 188 residues long: Adrenodoxin, mitochondrial (188 aa).

The N-terminal 64 residues, 1 to 64 (MAAAPGARLL…RPLSVSARAR (64 aa)), are a transit peptide targeting the mitochondrion. Ser-67 carries the phosphoserine modification. One can recognise a 2Fe-2S ferredoxin-type domain in the interval 69–175 (DKVTVHFKNR…NMTVRVPEAV (107 aa)). Lys-70 is subject to N6-acetyllysine; alternate. The residue at position 70 (Lys-70) is an N6-succinyllysine; alternate. Positions 110, 116, 119, and 156 each coordinate [2Fe-2S] cluster. Position 162 is an N6-succinyllysine (Lys-162). The residue at position 181 (Ser-181) is a Phosphoserine.

It belongs to the adrenodoxin/putidaredoxin family. As to quaternary structure, interacts with CYP11A1. [2Fe-2S] cluster is required as a cofactor. As to expression, found in all tissues, most abundant in adrenals, ovaries and testes.

It localises to the mitochondrion matrix. Essential for the synthesis of various steroid hormones. Participates in the reduction of mitochondrial cytochrome P450 for steroidogenesis. Transfers electrons from adrenodoxin reductase to CYP11A1, a cytochrome P450 that catalyzes cholesterol side-chain cleavage. Does not form a ternary complex with adrenodoxin reductase and CYP11A1 but shuttles between the two enzymes to transfer electrons. The protein is Adrenodoxin, mitochondrial (Fdx1) of Rattus norvegicus (Rat).